Reading from the N-terminus, the 338-residue chain is Glyceraldehyde-3-phosphate dehydrogenase GAPC2, cytosolic (338 aa).

NAD(+) is bound by residues 15 to 16, aspartate 37, and arginine 84; that span reads RI. D-glyceraldehyde 3-phosphate is bound at residue 155–157; the sequence is SCT. Residue cysteine 156 is the Nucleophile of the active site. An S-glutathionyl cysteine; transient; alternate modification is found at cysteine 156. At cysteine 156 the chain carries S-nitrosocysteine; transient; alternate. Cysteine 160 bears the S-nitrosocysteine; transient mark. D-glyceraldehyde 3-phosphate contacts are provided by residues threonine 186, 215–216, and arginine 238; that span reads TG. Asparagine 320 serves as a coordination point for NAD(+).

It belongs to the glyceraldehyde-3-phosphate dehydrogenase family. Homotetramer. Interacts with PLDDELTA. Binds to DPB3-1/NF-YC10 in response to heat-stress; this interaction promotes DPB3-1/NF-YC10 DNA-binding ability to its target promoter. Post-translationally, S-glutathionylation at Cys-156 in the presence of oxidized glutathione (GSSG). S-nitrosylation at Cys-156 and Cys-160 in the presence of S-nitrosoglutathione (GSNO) or sodium nitroprusside (SNP). These reactions may be both a protective mechanism against irreversible oxidation and a mean to store inhibited enzyme in a recoverable form.

It is found in the cytoplasm. Its subcellular location is the nucleus. It catalyses the reaction D-glyceraldehyde 3-phosphate + phosphate + NAD(+) = (2R)-3-phospho-glyceroyl phosphate + NADH + H(+). It participates in carbohydrate degradation; glycolysis; pyruvate from D-glyceraldehyde 3-phosphate: step 1/5. With respect to regulation, inhibition by oxidized glutathione (GSSG), S-nitrosoglutathione (GSNO) and hydrogen peroxide. Its function is as follows. Key enzyme in glycolysis that catalyzes the first step of the pathway by converting D-glyceraldehyde 3-phosphate (G3P) into 3-phospho-D-glyceroyl phosphate. Essential for the maintenance of cellular ATP levels and carbohydrate metabolism. Binds DNA in vitro. Together with DNA polymerase II subunit B3-1 (DPB3-1) and GAPC1, enhances heat tolerance and promotes the expression of heat-inducible genes. The chain is Glyceraldehyde-3-phosphate dehydrogenase GAPC2, cytosolic from Arabidopsis thaliana (Mouse-ear cress).